A 415-amino-acid chain; its full sequence is Mitochondrial tRNA-specific 2-thiouridylase 1 (415 aa).

Residues alanine 37–serine 44 and methionine 63 contribute to the ATP site. The segment at asparagine 124–aspartate 126 is interaction with target base in tRNA. Cysteine 129 acts as the Nucleophile in catalysis. Cysteine 129 and cysteine 234 are joined by a disulfide. Position 159 (glycine 159) interacts with ATP. Residues lysine 183–glutamine 185 form an interaction with tRNA region. Cysteine 234 (cysteine persulfide intermediate) is an active-site residue. The interaction with tRNA stretch occupies residues arginine 356 to histidine 357.

It belongs to the MnmA/TRMU family.

The protein localises to the mitochondrion. It carries out the reaction 5-taurinomethyluridine(34) in tRNA + S-sulfanyl-L-cysteinyl-[protein] + AH2 + ATP = 5-taurinomethyl-2-thiouridine(34) in tRNA + L-cysteinyl-[protein] + A + AMP + diphosphate + H(+). Functionally, catalyzes the 2-thiolation of uridine at the wobble position (U34) of mitochondrial tRNA(Lys), tRNA(Glu) and tRNA(Gln). Required for the formation of 5-taurinomethyl-2-thiouridine (tm5s2U) of mitochondrial tRNA(Lys), tRNA(Glu), and tRNA(Gln) at the wobble position. ATP is required to activate the C2 atom of the wobble base. This Schizosaccharomyces pombe (strain 972 / ATCC 24843) (Fission yeast) protein is Mitochondrial tRNA-specific 2-thiouridylase 1.